A 398-amino-acid chain; its full sequence is Phosphoglycerate kinase (398 aa).

Substrate-binding positions include 21–23, R36, 59–62, R119, and R157; these read DFN and HLGR. ATP contacts are provided by residues K208, G296, E327, and 354 to 357; that span reads GGDS.

This sequence belongs to the phosphoglycerate kinase family. Monomer.

It localises to the cytoplasm. It catalyses the reaction (2R)-3-phosphoglycerate + ATP = (2R)-3-phospho-glyceroyl phosphate + ADP. It functions in the pathway carbohydrate degradation; glycolysis; pyruvate from D-glyceraldehyde 3-phosphate: step 2/5. The polypeptide is Phosphoglycerate kinase (Streptococcus sanguinis (strain SK36)).